A 264-amino-acid polypeptide reads, in one-letter code: S-adenosylmethionine decarboxylase proenzyme (264 aa).

Ser112 functions as the Schiff-base intermediate with substrate; via pyruvic acid in the catalytic mechanism. At Ser112 the chain carries Pyruvic acid (Ser); by autocatalysis. His117 serves as the catalytic Proton acceptor; for processing activity. Cys140 acts as the Proton donor; for catalytic activity in catalysis.

It belongs to the prokaryotic AdoMetDC family. Type 2 subfamily. Heterooctamer of four alpha and four beta chains arranged as a tetramer of alpha/beta heterodimers. Pyruvate serves as cofactor. Is synthesized initially as an inactive proenzyme. Formation of the active enzyme involves a self-maturation process in which the active site pyruvoyl group is generated from an internal serine residue via an autocatalytic post-translational modification. Two non-identical subunits are generated from the proenzyme in this reaction, and the pyruvate is formed at the N-terminus of the alpha chain, which is derived from the carboxyl end of the proenzyme. The post-translation cleavage follows an unusual pathway, termed non-hydrolytic serinolysis, in which the side chain hydroxyl group of the serine supplies its oxygen atom to form the C-terminus of the beta chain, while the remainder of the serine residue undergoes an oxidative deamination to produce ammonia and the pyruvoyl group blocking the N-terminus of the alpha chain.

The catalysed reaction is S-adenosyl-L-methionine + H(+) = S-adenosyl 3-(methylsulfanyl)propylamine + CO2. It participates in amine and polyamine biosynthesis; S-adenosylmethioninamine biosynthesis; S-adenosylmethioninamine from S-adenosyl-L-methionine: step 1/1. Catalyzes the decarboxylation of S-adenosylmethionine to S-adenosylmethioninamine (dcAdoMet), the propylamine donor required for the synthesis of the polyamines spermine and spermidine from the diamine putrescine. The polypeptide is S-adenosylmethionine decarboxylase proenzyme (Shigella dysenteriae serotype 1 (strain Sd197)).